A 124-amino-acid chain; its full sequence is V-type proton ATPase subunit F 1 (124 aa).

This sequence belongs to the V-ATPase F subunit family. In terms of assembly, V-ATPase is a heteromultimeric enzyme made up of two complexes: the ATP-hydrolytic V1 complex and the proton translocation V0 complex. The V1 complex consists of three catalytic AB heterodimers that form a heterohexamer, three peripheral stalks each consisting of EG heterodimers, one central rotor including subunits D and F, and the regulatory subunits C and H. The proton translocation complex V0 consists of the proton transport subunit a, a ring of proteolipid subunits c9c'', rotary subunit d, subunits e and f, and the accessory subunits VhaAC45 and ATP6AP2.

In terms of biological role, subunit of the V1 complex of vacuolar(H+)-ATPase (V-ATPase), a multisubunit enzyme composed of a peripheral complex (V1) that hydrolyzes ATP and a membrane integral complex (V0) that translocates protons. V-ATPase is responsible for acidifying and maintaining the pH of intracellular compartments and in some cell types, is targeted to the plasma membrane, where it is responsible for acidifying the extracellular environment. The chain is V-type proton ATPase subunit F 1 (Vha14) from Drosophila pseudoobscura pseudoobscura (Fruit fly).